Consider the following 249-residue polypeptide: uncharacterized protein (249 aa).

A helical transmembrane segment spans residues 3 to 23 (WYWIGLLIVVVLFLLSAVRIV).

It belongs to the band 7/mec-2 family.

Its subcellular location is the membrane. This is an uncharacterized protein from Archaeoglobus fulgidus (strain ATCC 49558 / DSM 4304 / JCM 9628 / NBRC 100126 / VC-16).